The primary structure comprises 132 residues: Small ribosomal subunit protein uS8 (132 aa).

This sequence belongs to the universal ribosomal protein uS8 family. Part of the 30S ribosomal subunit. Contacts proteins S5 and S12.

One of the primary rRNA binding proteins, it binds directly to 16S rRNA central domain where it helps coordinate assembly of the platform of the 30S subunit. This chain is Small ribosomal subunit protein uS8, found in Geobacter sulfurreducens (strain ATCC 51573 / DSM 12127 / PCA).